The following is a 296-amino-acid chain: 4-hydroxybenzoate octaprenyltransferase (296 aa).

The next 8 membrane-spanning stretches (helical) occupy residues 28–48 (PIGI…AGKG), 52–72 (LANI…GCVI), 102–122 (ALVF…CTNA), 146–166 (YYPQ…AFTA), 169–189 (GELP…TVGY), 219–239 (VIIL…GSKF), 241–261 (LGMW…WEFW), and 275–295 (FLHN…DYAL).

It belongs to the UbiA prenyltransferase family. Mg(2+) serves as cofactor.

The protein localises to the cell inner membrane. It carries out the reaction all-trans-octaprenyl diphosphate + 4-hydroxybenzoate = 4-hydroxy-3-(all-trans-octaprenyl)benzoate + diphosphate. It participates in cofactor biosynthesis; ubiquinone biosynthesis. Catalyzes the prenylation of para-hydroxybenzoate (PHB) with an all-trans polyprenyl group. Mediates the second step in the final reaction sequence of ubiquinone-8 (UQ-8) biosynthesis, which is the condensation of the polyisoprenoid side chain with PHB, generating the first membrane-bound Q intermediate 3-octaprenyl-4-hydroxybenzoate. The sequence is that of 4-hydroxybenzoate octaprenyltransferase from Pseudomonas fluorescens (strain Pf0-1).